Consider the following 1014-residue polypeptide: DNA translocase FtsK 2 (1014 aa).

The helical transmembrane segment at 1 to 21 (MFWIVLIVILLLALAGLFFVR) threads the bilayer. Disordered stretches follow at residues 89–142 (ESEP…EDIA), 283–318 (RHAGQGKGQAEAKSPDVSQGQSVSDGTAVRDARRRV), and 487–525 (SQAVCPFENVPSERPSRRASDTEADEGAFQSEETGAVSE). Positions 121–140 (EEAETEEAEAAEEEAADTED) are enriched in acidic residues. Polar residues predominate over residues 298 to 307 (DVSQGQSVSD). The region spanning 662-871 (GQPVVTDLGK…FQVSSKIDSR (210 aa)) is the FtsK domain. Residue 682–687 (GSGKSV) coordinates ATP.

Belongs to the FtsK/SpoIIIE/SftA family. As to quaternary structure, homohexamer. Forms a ring that surrounds DNA.

It localises to the cell inner membrane. Functionally, essential cell division protein that coordinates cell division and chromosome segregation. The N-terminus is involved in assembly of the cell-division machinery. The C-terminus functions as a DNA motor that moves dsDNA in an ATP-dependent manner towards the dif recombination site, which is located within the replication terminus region. Translocation stops specifically at Xer-dif sites, where FtsK interacts with the Xer recombinase, allowing activation of chromosome unlinking by recombination. FtsK orienting polar sequences (KOPS) guide the direction of DNA translocation. FtsK can remove proteins from DNA as it translocates, but translocation stops specifically at XerCD-dif site, thereby preventing removal of XerC and XerD from dif. The protein is DNA translocase FtsK 2 (ftsK2) of Neisseria meningitidis serogroup A / serotype 4A (strain DSM 15465 / Z2491).